A 256-amino-acid polypeptide reads, in one-letter code: Thiazole synthase (256 aa).

Catalysis depends on Lys-95, which acts as the Schiff-base intermediate with DXP. Residues Gly-156, 182–183 (AG), and 204–205 (NT) each bind 1-deoxy-D-xylulose 5-phosphate.

Belongs to the ThiG family. As to quaternary structure, homotetramer. Forms heterodimers with either ThiH or ThiS.

Its subcellular location is the cytoplasm. It carries out the reaction [ThiS sulfur-carrier protein]-C-terminal-Gly-aminoethanethioate + 2-iminoacetate + 1-deoxy-D-xylulose 5-phosphate = [ThiS sulfur-carrier protein]-C-terminal Gly-Gly + 2-[(2R,5Z)-2-carboxy-4-methylthiazol-5(2H)-ylidene]ethyl phosphate + 2 H2O + H(+). Its pathway is cofactor biosynthesis; thiamine diphosphate biosynthesis. Functionally, catalyzes the rearrangement of 1-deoxy-D-xylulose 5-phosphate (DXP) to produce the thiazole phosphate moiety of thiamine. Sulfur is provided by the thiocarboxylate moiety of the carrier protein ThiS. In vitro, sulfur can be provided by H(2)S. In Photobacterium profundum (strain SS9), this protein is Thiazole synthase.